Consider the following 261-residue polypeptide: MAKLLLFLLPAILGLLIPRSAVALGTNYLLSGQTLNTDGHLKNGDFDLVMQNDCNLVLYNGNWQSNTANNGRDCKLTLTDYGELVIKNGDGSTVWRSRAKSVKGNYAAVLHPDGRLVVFGPSVFKIDPWVPGLNSLRFRNIPFTDNLLFSGQVLYGDGRLTAKNHQLVMQGDCNLVLYGGKYGWQSNTHGNGEHCFLRLNHKGELIIKDDDFRTIWSSSSSSKQGDYVLILQDDGFAVIYGPAIWETSSKRSIADVGEDDG.

An N-terminal signal peptide occupies residues 1–23; it reads MAKLLLFLLPAILGLLIPRSAVA. Bulb-type lectin domains follow at residues 26-131 and 145-252; these read TNYL…PWVP and DNLL…SKRS. Beta-D-mannose-binding positions include 51–55, Tyr59, Trp63, Gln64, 170–174, Tyr178, and 182–185; these read QNDCN, QGDCN, and YGWQ. A Carbohydrate-binding motif 1 motif is present at residues 51-59; sequence QNDCNLVLY. 2 cysteine pairs are disulfide-bonded: Cys54–Cys74 and Cys173–Cys195. A Carbohydrate-binding motif 2 motif is present at residues 170–178; it reads QGDCNLVLY.

Forms heterotetramer of 2 chains 1 and 2 chains 2 arranged as a dimer of chain 1 and chain 2 heterodimers.

Functionally, mannose-specific lectin. Shows agglutinating activity towards erythrocytes from rabbit. This chain is Mannose-specific lectin 2, found in Colocasia esculenta (Wild taro).